The primary structure comprises 163 residues: Transcriptional repressor NrdR (163 aa).

A zinc finger spans residues 3–34; it reads CPSCNSESSRVVDSRSIEMGVSIRRRRECSEC. Residues 46–136 form the ATP-cone domain; that stretch reads LLVVKRNGVT…VYKSFNCAED (91 aa).

This sequence belongs to the NrdR family. Requires Zn(2+) as cofactor.

Its function is as follows. Negatively regulates transcription of bacterial ribonucleotide reductase nrd genes and operons by binding to NrdR-boxes. The sequence is that of Transcriptional repressor NrdR from Corynebacterium jeikeium (strain K411).